Consider the following 457-residue polypeptide: Oxygen-independent coproporphyrinogen III oxidase (457 aa).

In terms of domain architecture, Radical SAM core spans 47–280 (RYPERPLSLY…QETIVSLTQA (234 aa)). Position 56 (Tyr56) interacts with S-adenosyl-L-methionine. Residues Cys62 and Cys66 each contribute to the [4Fe-4S] cluster site. Phe68 serves as a coordination point for S-adenosyl-L-methionine. Cys69 is a binding site for [4Fe-4S] cluster. Residues Gly112, 113–114 (GT), Glu145, Gln172, Arg184, Asp209, Ala243, and Ile329 contribute to the S-adenosyl-L-methionine site.

The protein belongs to the anaerobic coproporphyrinogen-III oxidase family. In terms of assembly, monomer. [4Fe-4S] cluster is required as a cofactor.

Its subcellular location is the cytoplasm. The catalysed reaction is coproporphyrinogen III + 2 S-adenosyl-L-methionine = protoporphyrinogen IX + 2 5'-deoxyadenosine + 2 L-methionine + 2 CO2. Its pathway is porphyrin-containing compound metabolism; protoporphyrin-IX biosynthesis; protoporphyrinogen-IX from coproporphyrinogen-III (AdoMet route): step 1/1. Functionally, involved in the heme biosynthesis. Catalyzes the anaerobic oxidative decarboxylation of propionate groups of rings A and B of coproporphyrinogen III to yield the vinyl groups in protoporphyrinogen IX. In Salmonella typhi, this protein is Oxygen-independent coproporphyrinogen III oxidase (hemN).